Here is a 261-residue protein sequence, read N- to C-terminus: Probable membrane transporter protein PD_1894 (261 aa).

The next 8 helical transmembrane spans lie at 6-26 (LIVTIGSGGLVGFALGLLGGG), 45-64 (HIAIGTSAVAVSVNAYANLI), 78-98 (VIFALVGTLGAFLGSSIGMLI), 99-119 (DGQRLLLLFGLLMAMVGLLML), 150-170 (AASGFFGIGGGFLIVPALIFA), 175-195 (TINAIGSSLLAVGSFGLITTL), 205-225 (WTIAMEFIVGGITGGGLGTLL), and 239-259 (VFGLIVIAVAIYVIWRSWASL).

Belongs to the 4-toluene sulfonate uptake permease (TSUP) (TC 2.A.102) family.

It localises to the cell membrane. The chain is Probable membrane transporter protein PD_1894 from Xylella fastidiosa (strain Temecula1 / ATCC 700964).